We begin with the raw amino-acid sequence, 553 residues long: Glutamyl-tRNA(Gln) amidotransferase subunit B, mitochondrial (553 aa).

The transit peptide at 1–18 directs the protein to the mitochondrion; sequence MAASTSGYSGVLFRLRKY.

This sequence belongs to the GatB/GatE family. GatB subfamily. Subunit of the heterotrimeric GatCAB amidotransferase (AdT) complex, composed of A (qrsl1), B (gatb) and C (gatc) subunits.

Its subcellular location is the mitochondrion. The enzyme catalyses L-glutamyl-tRNA(Gln) + L-glutamine + ATP + H2O = L-glutaminyl-tRNA(Gln) + L-glutamate + ADP + phosphate + H(+). Allows the formation of correctly charged Gln-tRNA(Gln) through the transamidation of misacylated Glu-tRNA(Gln) in the mitochondria. The reaction takes place in the presence of glutamine and ATP through an activated gamma-phospho-Glu-tRNA(Gln). The protein is Glutamyl-tRNA(Gln) amidotransferase subunit B, mitochondrial of Danio rerio (Zebrafish).